A 392-amino-acid chain; its full sequence is Large ribosomal subunit protein uL3 (392 aa).

This sequence belongs to the universal ribosomal protein uL3 family.

The protein localises to the cytoplasm. The L3 protein is a component of the large subunit of cytoplasmic ribosomes. The protein is Large ribosomal subunit protein uL3 (rpl3) of Aspergillus fumigatus (strain ATCC MYA-4609 / CBS 101355 / FGSC A1100 / Af293) (Neosartorya fumigata).